We begin with the raw amino-acid sequence, 341 residues long: GTP 3',8-cyclase (341 aa).

The Radical SAM core domain occupies 17-235 (TYGRVATDLR…LRTRFELTAE (219 aa)). Arg-26 contacts GTP. Residues Cys-33 and Cys-37 each contribute to the [4Fe-4S] cluster site. S-adenosyl-L-methionine is bound at residue Tyr-39. Cys-40 provides a ligand contact to [4Fe-4S] cluster. A GTP-binding site is contributed by Arg-77. Gly-81 serves as a coordination point for S-adenosyl-L-methionine. Thr-108 is a GTP binding site. Ser-132 provides a ligand contact to S-adenosyl-L-methionine. Lys-169 contributes to the GTP binding site. Met-203 lines the S-adenosyl-L-methionine pocket. Residues Cys-268 and Cys-271 each contribute to the [4Fe-4S] cluster site. 273-275 (RTR) is a GTP binding site. Residue Cys-285 coordinates [4Fe-4S] cluster.

It belongs to the radical SAM superfamily. MoaA family. As to quaternary structure, monomer and homodimer. The cofactor is [4Fe-4S] cluster.

The enzyme catalyses GTP + AH2 + S-adenosyl-L-methionine = (8S)-3',8-cyclo-7,8-dihydroguanosine 5'-triphosphate + 5'-deoxyadenosine + L-methionine + A + H(+). Its pathway is cofactor biosynthesis; molybdopterin biosynthesis. Catalyzes the cyclization of GTP to (8S)-3',8-cyclo-7,8-dihydroguanosine 5'-triphosphate. This is GTP 3',8-cyclase from Streptomyces coelicolor (strain ATCC BAA-471 / A3(2) / M145).